The primary structure comprises 676 residues: Polyunsaturated fatty acid lipoxygenase ALOX15B (676 aa).

Positions 2–124 (AEFRVRVSTG…TLVLQEGTAK (123 aa)) constitute a PLAT domain. Ca(2+) contacts are provided by Gly-15, Gly-17, Asp-39, Asn-40, Gly-42, Glu-44, Asp-85, and Ala-86. Positions 125-676 (VSWADHHPVL…PPLIENSVSI (552 aa)) constitute a Lipoxygenase domain. Residues His-373, His-378, His-553, and Ile-676 each contribute to the Fe cation site.

Belongs to the lipoxygenase family. Requires Fe cation as cofactor. Expressed in hair, prostate, lung, ovary, lymph node, spinal cord and cornea.

Its subcellular location is the nucleus. The protein localises to the cytoplasm. It is found in the cytosol. The protein resides in the cell membrane. It localises to the cytoskeleton. Its subcellular location is the membrane. The protein localises to the cell junction. It is found in the adherens junction. The protein resides in the focal adhesion. It carries out the reaction (5Z,8Z,11Z,14Z)-eicosatetraenoate + O2 = (15S)-hydroperoxy-(5Z,8Z,11Z,13E)-eicosatetraenoate. It catalyses the reaction (9Z,12Z)-octadecadienoate + O2 = 13-hydroperoxy-(9Z,11E)-octadecadienoate. The catalysed reaction is (5S)-hydroxy-(6E,8Z,11Z,14Z)-eicosatetraenoate + O2 = (5S)-hydroxy-(15S)-hydroperoxy-(6E,8Z,11Z,13E)-eicosatetraenoate. The enzyme catalyses (5Z,8Z,11Z,14Z)-eicosatetraenoate + O2 = 5-hydroperoxy-(6E,8Z,11Z,14Z)-eicosatetraenoate. It carries out the reaction (5S,6R)-dihydroxy-(7E,9E,11Z,14Z)-eicosatetraenoate + O2 = (5S,6R)-dihydroxy-(15S)-hydroperoxy-(7E,9E,11Z,13E)-eicosatetraenoate. It catalyses the reaction (5S)-hydroperoxy-(6E,8Z,11Z,14Z)-eicosatetraenoate + O2 = (5S,15S)-dihydroperoxy-(6E,8Z,11Z,13E)-eicosatetraenoate. The catalysed reaction is 2-(5Z,8Z,11Z,14Z-eicosatetraenoyl)-glycerol + O2 = 2-[15(S)-hydroperoxy-(5Z,8Z,11Z,13E)-eicosatetraenoyl]-glycerol. The enzyme catalyses (8S)-hydroperoxy-(5Z,9E,11Z,14Z)-eicosatetraenoate + O2 = (8S,15S)-dihydroperoxy-(5Z,9E,11Z,13E)-eicosatetraenoate. It carries out the reaction N-(5Z,8Z,11Z,14Z)-eicosatetraenoyl-L-alanine + O2 = N-(15S)-hydroperoxy-(5Z,8Z,11Z,13E)-eicosatetraenoyl-alanine. It catalyses the reaction N-(5Z,8Z,11Z,14Z)-eicosatetraenoyl-gamma-aminobutanoate + O2 = N-(15S)-hydroperoxy-(5Z,8Z,11Z,13E)-eicosatetraenoyl-gamma-aminobutanoate. The catalysed reaction is N-(5Z,8Z,11Z,14Z)-eicosatetraenoyl-glycine + O2 = N-(15S)-hydroperoxy-(5Z,8Z,11Z,13E)-eicosatetraenoyl-glycine. The enzyme catalyses N-(5Z,8Z,11Z,14Z)-eicosatetraenoyl-taurine + O2 = N-(15S)-hydroperoxy-(5Z,8Z,11Z,13E)-eicosatetraenoyl-taurine. It carries out the reaction 2-(5Z,8Z,11Z,14Z-eicosatetraenoyl)-glycerol + O2 = 2-[12-hydroperoxy-(5Z,8Z,10E,14Z)-eicosatetraenoyl]-glycerol. It catalyses the reaction 1-octadecanoyl-2-(5Z,8Z,11Z,14Z-eicosatetraenoyl)-sn-glycero-3-phosphocholine + O2 = 1-octadecanoyl-2-(15-hydroperoxy-5Z,8Z,11Z,13E-eicosatetraenoyl)-sn-glycero-3-phosphocholine. The catalysed reaction is a 1-acyl-2-(5Z,8Z,11Z,14Z-eicosatetraenoyl)-sn-glycero-3-phospho-(1D-myo-inositol) + O2 = a 1-acyl-2-(15-hydroperoxy-5Z,8Z,11Z,13E-eicosatetraenoyl)-sn-glycero-3-phospho-(1D-myo-inositol). The enzyme catalyses a 1-acyl-2-(8Z,11Z,14Z-eicosatrienoyl)-sn-glycero-3-phospho-(1D-myo-inositol) + O2 = a 1-acyl-2-(15-hydroperoxy-8Z,11Z,13E-eicosatrienoyl)-sn-glycero-3-phospho-(1D-myo-inositol). It carries out the reaction 1-octadecanoyl-2-(5Z,8Z,11Z,14Z)-eicosatetraenoyl-sn-glycero-3-phosphoethanolamine + O2 = 1-octadecanoyl-2-(15-hydroperoxy-5Z,8Z,11Z,13E-eicosatetraenoyl)-sn-glycero-3-phosphoethanolamine. It catalyses the reaction 1-octadecanoyl-2-(5Z,8Z,11Z,14Z-eicosatetraenoyl)-sn-glycero-3-phospho-(1D-myo-inositol) + O2 = 1-octadecanoyl-2-(15-hydroperoxy-5Z,8Z,11Z,13E-eicosatetraenoyl)-sn-glycero-3-phospho-(1D-myo-inositol). The catalysed reaction is (8Z,11Z,14Z)-eicosatrienoate + O2 = 15-hydroperoxy-(8Z,11Z,13E)-eicosatrienoate. The enzyme catalyses (7S)-hydroperoxy-(4Z,8E,10Z,13Z,16Z,19Z)-docosahexaenoate + O2 = (7S,17S)-dihydroperoxy-(4Z,8E,10Z,13Z,15E,19Z)-docosahexaenoate. It carries out the reaction (5Z,8Z,11Z,14Z)-eicosatetraenoate + O2 = 15-hydroperoxy-(5Z,8Z,11Z,13E)-eicosatetraenoate. The protein operates within lipid metabolism; hydroperoxy eicosatetraenoic acid biosynthesis. Non-heme iron-containing dioxygenase that catalyzes the stereo-specific peroxidation of free and esterified polyunsaturated fatty acids (PUFAs) generating a spectrum of bioactive lipid mediators. It inserts peroxyl groups at C15 of arachidonate ((5Z,8Z,11Z,14Z)-eicosatetraenoate) producing (15S)-hydroperoxyeicosatetraenoate/(15S)-HPETE. Also peroxidizes linoleate ((9Z,12Z)-octadecadienoate) to 13-hydroperoxyoctadecadienoate/13-HPODE. Oxygenates arachidonyl derivatives such as 2-arachidonoylglycerol (2-AG) leading to the production and extracellular release of 15-hydroxyeicosatetraenoyl glycerol (15-HETE-G) that acts as a peroxisome proliferator-activated receptor alpha agonist. Has the ability to efficiently class-switch ALOX5 pro-inflammatory mediators into anti-inflammatory intermediates. Participates in the sequential oxidations of DHA ((4Z,7Z,10Z,13Z,16Z,19Z)-docosahexaenoate) to generate specialized pro-resolving mediators (SPMs) resolvin D5 ((7S,17S)-diHPDHA), which can actively down-regulate the immune response and have anti-aggregation properties with platelets. In addition to free PUFAs hydrolyzed from phospholipids, it directly oxidizes PUFAs esterified to membrane-bound phospholipids. Has no detectable 8S-lipoxygenase activity on arachidonate but reacts with (8S)-HPETE to produce (8S,15S)-diHPETE. May regulate progression through the cell cycle and cell proliferation. May also regulate cytokine secretion by macrophages and therefore play a role in the immune response. May also regulate macrophage differentiation into proatherogenic foam cells. Functionally, does not convert arachidonic acid to 15S-hydroperoxyeicosatetraenoic acid/(15S)-HPETE. The chain is Polyunsaturated fatty acid lipoxygenase ALOX15B from Homo sapiens (Human).